A 115-amino-acid polypeptide reads, in one-letter code: Ribonuclease P protein component (115 aa).

It belongs to the RnpA family. Consists of a catalytic RNA component (M1 or rnpB) and a protein subunit.

It catalyses the reaction Endonucleolytic cleavage of RNA, removing 5'-extranucleotides from tRNA precursor.. Functionally, RNaseP catalyzes the removal of the 5'-leader sequence from pre-tRNA to produce the mature 5'-terminus. It can also cleave other RNA substrates such as 4.5S RNA. The protein component plays an auxiliary but essential role in vivo by binding to the 5'-leader sequence and broadening the substrate specificity of the ribozyme. In Staphylococcus carnosus (strain TM300), this protein is Ribonuclease P protein component.